The primary structure comprises 1172 residues: Thrombospondin-2 (1172 aa).

An N-terminal signal peptide occupies residues 1-18 (MLWALALLALGIGPRASA). In terms of domain architecture, Laminin G-like spans 19–215 (GDHVKDTSFD…LQNVHLVFAD (197 aa)). The tract at residues 19–232 (GDHVKDTSFD…KKGCQHSQGA (214 aa)) is heparin-binding. Residues asparagine 151, asparagine 316, and asparagine 330 are each glycosylated (N-linked (GlcNAc...) asparagine). Residues 318 to 375 (SACVQEGRIFAENETWVVDSCTTCTCKKFKTVCHQITCSPATCANPSFVEGECCPSCS) enclose the VWFC domain. TSP type-1 domains lie at 381-431 (DEGW…GKCD), 437-492 (NGGW…DPCP), and 494-549 (DGRW…RSCP). Disulfide bonds link cysteine 393/cysteine 425, cysteine 397/cysteine 430, cysteine 408/cysteine 415, cysteine 449/cysteine 486, cysteine 453/cysteine 491, cysteine 464/cysteine 476, cysteine 506/cysteine 543, cysteine 510/cysteine 548, cysteine 521/cysteine 533, cysteine 553/cysteine 564, cysteine 558/cysteine 574, cysteine 577/cysteine 588, cysteine 594/cysteine 610, cysteine 601/cysteine 619, cysteine 622/cysteine 646, cysteine 652/cysteine 665, cysteine 659/cysteine 678, cysteine 680/cysteine 691, cysteine 707/cysteine 715, cysteine 720/cysteine 740, cysteine 756/cysteine 776, cysteine 779/cysteine 799, cysteine 815/cysteine 835, cysteine 838/cysteine 858, cysteine 876/cysteine 896, cysteine 912/cysteine 932, and cysteine 948/cysteine 1169. A glycan (N-linked (GlcNAc...) asparagine) is linked at asparagine 457. Positions 549–589 (PIDGCLSNPCFPGAKCNSFPDGSWSCGSCPVGFLGNGTHCE) constitute an EGF-like 1 domain. An N-linked (GlcNAc...) asparagine glycan is attached at asparagine 584. Positions 648–692 (PENPCKDKTHSCHKNAECIYLGHFSDPMYKCECQIGYAGDGLICG) constitute an EGF-like 2 domain. 8 TSP type-3 repeats span residues 693-728 (EDSD…NSGQ), 729-764 (EDFD…NPRQ), 765-787 (LDYD…NPAQ), 788-823 (IDTD…NTDQ), 824-846 (RDTD…NPDQ), 847-884 (IDQD…NSNQ), 885-920 (ADHD…NPDQ), and 921-956 (EDSD…AITE). Asparagine 710 is a glycosylation site (N-linked (GlcNAc...) asparagine). The tract at residues 727 to 752 (GQEDFDKDGIGDACDEDDDNDGVSDE) is disordered. Residues 739–749 (ACDEDDDNDGV) are compositionally biased toward acidic residues. The segment at 846-938 (QIDQDNDLVG…GDICKDDFDN (93 aa)) is disordered. Residues 847–866 (IDQDNDLVGDQCDNNEDIDD) are compositionally biased toward acidic residues. A compositionally biased stretch (polar residues) spans 870 to 884 (QNNQDNCPYISNSNQ). Positions 885 to 895 (ADHDNDGKGDA) are enriched in basic and acidic residues. Residues 896–905 (CDSDDDNDGV) show a composition bias toward acidic residues. The span at 925–935 (GDGRGDICKDD) shows a compositional bias: basic and acidic residues. A Cell attachment site motif is present at residues 928-930 (RGD). A TSP C-terminal domain is found at 960 to 1172 (RNFQMVPLDP…SDLKYECRDA (213 aa)). An N-linked (GlcNAc...) asparagine glycan is attached at asparagine 1069.

The protein belongs to the thrombospondin family. Homotrimer; disulfide-linked. Can bind to fibrinogen, fibronectin, laminin and type V collagen. Interacts (via the TSP type I repeats) with CD36; the interaction conveys an antiangiogenic effect. Interacts (via the TSP type I repeats) with HRG; the interaction blocks the antiangiogenic effect of THBS2 with CD36. Can bind to fibrinogen, fibronectin, laminin.

Its function is as follows. Adhesive glycoprotein that mediates cell-to-cell and cell-to-matrix interactions. Ligand for CD36 mediating antiangiogenic properties. This chain is Thrombospondin-2 (Thbs2), found in Mus musculus (Mouse).